A 382-amino-acid polypeptide reads, in one-letter code: Processive diacylglycerol beta-glucosyltransferase (382 aa).

Belongs to the glycosyltransferase 28 family. UgtP subfamily.

Its subcellular location is the cell membrane. The catalysed reaction is a 1,2-diacyl-3-O-(beta-D-glucopyranosyl)-sn-glycerol + UDP-alpha-D-glucose = a 1,2-diacyl-3-O-(beta-D-Glc-(1-&gt;6)-beta-D-Glc)-sn-glycerol + UDP + H(+). It catalyses the reaction a 1,2-diacyl-3-O-(beta-D-Glc-(1-&gt;6)-beta-D-Glc)-sn-glycerol + UDP-alpha-D-glucose = a 1,2-diacyl-3-O-(beta-D-Glc-(1-&gt;6)-beta-D-Glc-(1-&gt;6)-beta-D-Glc)-sn-glycerol + UDP + H(+). It carries out the reaction a 1,2-diacyl-sn-glycerol + UDP-alpha-D-glucose = a 1,2-diacyl-3-O-(beta-D-glucopyranosyl)-sn-glycerol + UDP + H(+). Its pathway is glycolipid metabolism; diglucosyl-diacylglycerol biosynthesis. Processive glucosyltransferase involved in the biosynthesis of both the bilayer- and non-bilayer-forming membrane glucolipids. Is able to successively transfer up to three glucosyl residues to diacylglycerol (DAG), thereby catalyzing the formation of beta-monoglucosyl-DAG (3-O-(beta-D-glucopyranosyl)-1,2-diacyl-sn-glycerol), beta-diglucosyl-DAG (3-O-(beta-D-glucopyranosyl-beta-(1-&gt;6)-D-glucopyranosyl)-1,2-diacyl-sn-glycerol) and beta-triglucosyl-DAG (3-O-(beta-D-glucopyranosyl-beta-(1-&gt;6)-D-glucopyranosyl-beta-(1-&gt;6)-D-glucopyranosyl)-1,2-diacyl-sn-glycerol). Beta-diglucosyl-DAG is the predominant glycolipid found in Bacillales and is also used as a membrane anchor for lipoteichoic acid (LTA). Also seems to be able to form beta-tetraglucosyl-DAG, although this glycolipid has not been found in B.subtilis membrane. UgtP can only use UDP-glucose as sugar donor. The protein is Processive diacylglycerol beta-glucosyltransferase of Bacillus subtilis (strain 168).